A 432-amino-acid chain; its full sequence is Glutamyl-tRNA reductase (432 aa).

Substrate is bound by residues 55–58 (TCNR), S114, 119–121 (ETQ), and Q125. C56 functions as the Nucleophile in the catalytic mechanism. Residue 194 to 199 (GAGEMI) participates in NADP(+) binding.

The protein belongs to the glutamyl-tRNA reductase family. Homodimer.

The enzyme catalyses (S)-4-amino-5-oxopentanoate + tRNA(Glu) + NADP(+) = L-glutamyl-tRNA(Glu) + NADPH + H(+). The protein operates within porphyrin-containing compound metabolism; protoporphyrin-IX biosynthesis; 5-aminolevulinate from L-glutamyl-tRNA(Glu): step 1/2. Catalyzes the NADPH-dependent reduction of glutamyl-tRNA(Glu) to glutamate 1-semialdehyde (GSA). The sequence is that of Glutamyl-tRNA reductase from Burkholderia orbicola (strain AU 1054).